The following is a 152-amino-acid chain: Large ribosomal subunit protein uL15 (152 aa).

The segment covering 1–12 (MTSTLNTLKSNT) has biased composition (polar residues). The disordered stretch occupies residues 1 to 57 (MTSTLNTLKSNTGSRKKKLRKGRGIAAGQGASCGFGMRGQKSRSGRPTRPGFEGGQM). Residues 14-23 (SRKKKLRKGR) show a composition bias toward basic residues. Over residues 25 to 37 (IAAGQGASCGFGM) the composition is skewed to gly residues.

The protein belongs to the universal ribosomal protein uL15 family. Part of the 50S ribosomal subunit.

Functionally, binds to the 23S rRNA. This Prochlorococcus marinus subsp. pastoris (strain CCMP1986 / NIES-2087 / MED4) protein is Large ribosomal subunit protein uL15.